Reading from the N-terminus, the 193-residue chain is NADH-quinone oxidoreductase subunit B (193 aa).

Positions 1–11 (MGLTGTNTTLV) are enriched in polar residues. The disordered stretch occupies residues 1-23 (MGLTGTNTTLVAPQPKGILDPRT). Positions 72, 73, 137, and 167 each coordinate [4Fe-4S] cluster.

Belongs to the complex I 20 kDa subunit family. As to quaternary structure, NDH-1 is composed of 14 different subunits. Subunits NuoB, C, D, E, F, and G constitute the peripheral sector of the complex. It depends on [4Fe-4S] cluster as a cofactor.

The protein localises to the cell inner membrane. It carries out the reaction a quinone + NADH + 5 H(+)(in) = a quinol + NAD(+) + 4 H(+)(out). Its function is as follows. NDH-1 shuttles electrons from NADH, via FMN and iron-sulfur (Fe-S) centers, to quinones in the respiratory chain. Couples the redox reaction to proton translocation (for every two electrons transferred, four hydrogen ions are translocated across the cytoplasmic membrane), and thus conserves the redox energy in a proton gradient. This chain is NADH-quinone oxidoreductase subunit B, found in Brucella canis (strain ATCC 23365 / NCTC 10854 / RM-666).